The following is a 470-amino-acid chain: Light-independent protochlorophyllide reductase subunit N (470 aa).

Residues cysteine 22, cysteine 47, and cysteine 107 each contribute to the [4Fe-4S] cluster site.

Belongs to the BchN/ChlN family. In terms of assembly, protochlorophyllide reductase is composed of three subunits; ChlL, ChlN and ChlB. Forms a heterotetramer of two ChlB and two ChlN subunits. [4Fe-4S] cluster serves as cofactor.

The protein resides in the plastid. It is found in the chloroplast. It catalyses the reaction chlorophyllide a + oxidized 2[4Fe-4S]-[ferredoxin] + 2 ADP + 2 phosphate = protochlorophyllide a + reduced 2[4Fe-4S]-[ferredoxin] + 2 ATP + 2 H2O. Its pathway is porphyrin-containing compound metabolism; chlorophyll biosynthesis (light-independent). Functionally, component of the dark-operative protochlorophyllide reductase (DPOR) that uses Mg-ATP and reduced ferredoxin to reduce ring D of protochlorophyllide (Pchlide) to form chlorophyllide a (Chlide). This reaction is light-independent. The NB-protein (ChlN-ChlB) is the catalytic component of the complex. The polypeptide is Light-independent protochlorophyllide reductase subunit N (Pinus koraiensis (Korean pine)).